The primary structure comprises 434 residues: Enolase (434 aa).

Glutamine 165 contributes to the (2R)-2-phosphoglycerate binding site. Glutamate 207 (proton donor) is an active-site residue. Positions 244, 291, and 318 each coordinate Mg(2+). The (2R)-2-phosphoglycerate site is built by lysine 343, arginine 372, serine 373, and lysine 394. Lysine 343 functions as the Proton acceptor in the catalytic mechanism.

This sequence belongs to the enolase family. It depends on Mg(2+) as a cofactor.

The protein localises to the cytoplasm. It localises to the secreted. The protein resides in the cell surface. It carries out the reaction (2R)-2-phosphoglycerate = phosphoenolpyruvate + H2O. It participates in carbohydrate degradation; glycolysis; pyruvate from D-glyceraldehyde 3-phosphate: step 4/5. In terms of biological role, catalyzes the reversible conversion of 2-phosphoglycerate (2-PG) into phosphoenolpyruvate (PEP). It is essential for the degradation of carbohydrates via glycolysis. The sequence is that of Enolase from Staphylococcus aureus (strain USA300 / TCH1516).